The following is a 444-amino-acid chain: 23S rRNA (uracil(1939)-C(5))-methyltransferase RlmD (444 aa).

The 60-residue stretch at 5-64 (KPKLNLTSQTARIVNLSHDGRGIARVNGKATFIQGALPGEVVEFQYTRIKKDFDEGKLLS) folds into the TRAM domain. [4Fe-4S] cluster-binding residues include Cys-77, Cys-83, Cys-86, and Cys-166. S-adenosyl-L-methionine contacts are provided by Gln-276, Phe-305, Asn-310, Glu-326, Asn-353, and Asp-374. The active-site Nucleophile is Cys-400.

This sequence belongs to the class I-like SAM-binding methyltransferase superfamily. RNA M5U methyltransferase family. RlmD subfamily.

The enzyme catalyses uridine(1939) in 23S rRNA + S-adenosyl-L-methionine = 5-methyluridine(1939) in 23S rRNA + S-adenosyl-L-homocysteine + H(+). Its function is as follows. Catalyzes the formation of 5-methyl-uridine at position 1939 (m5U1939) in 23S rRNA. This chain is 23S rRNA (uracil(1939)-C(5))-methyltransferase RlmD, found in Legionella pneumophila (strain Corby).